The sequence spans 154 residues: 3-hydroxyacyl-[acyl-carrier-protein] dehydratase FabZ (154 aa).

H55 is a catalytic residue.

This sequence belongs to the thioester dehydratase family. FabZ subfamily.

The protein resides in the cytoplasm. It catalyses the reaction a (3R)-hydroxyacyl-[ACP] = a (2E)-enoyl-[ACP] + H2O. In terms of biological role, involved in unsaturated fatty acids biosynthesis. Catalyzes the dehydration of short chain beta-hydroxyacyl-ACPs and long chain saturated and unsaturated beta-hydroxyacyl-ACPs. The protein is 3-hydroxyacyl-[acyl-carrier-protein] dehydratase FabZ of Nitratidesulfovibrio vulgaris (strain ATCC 29579 / DSM 644 / CCUG 34227 / NCIMB 8303 / VKM B-1760 / Hildenborough) (Desulfovibrio vulgaris).